A 1556-amino-acid polypeptide reads, in one-letter code: MSFQYPLLAPMTNSSVATNSNQPFLGQPWLVEERDACGVGFIANLRGKPDHTLVEQALKALGCMEHRGGCSADNDSGDGAGVMTAIPRELLAQWFNTRNLPMPDGDRLGVGMVFLPQEPSAREVARAYVEEVVRLEKLTVLGWREVPVNSDVLGIQAKNNQPHIEQILVTCPEGCAGDELDRRLYIARSIIGKKLAEDFYVCSFSCRTIVYKGMVRSIILGEFYLDLKNPGYTSNFAVYHRRFSTNTMPKWPLAQPMRLLGHNGEINTLLGNINWMAAREKELEVSGWTKAELEALTPIVNQANSDSYNLDSALELLVRTGRSPLEAAMILVPEAYKNQPALKDYPEISDFHDYYSGLQEPWDGPALLVFSDGKIVGAGLDRNGLRPARYCITKDDYIVLGSEAGVVDLPEVDIVEKGRLAPGQMIAVDLAEQKILKNYQIKQQAAQKYPYGEWIKIQRQTVASDSFAEKTLFNDAQTVLQQQAAFGYTAEDVEMVVVPMASQGKEPTFCMGDDTPLAVLSHKPRLLYDYFKQRFAQVTNPPIDPLRENLVMSLAMFLGKRGNLLEPKAESARTIKLRSPLVNEVELQAIKTGQLQVAEVSTLYDLDGVNSLETALDNLVKTAIATVQAGAEILVLTDRPNGAILTENQSFIPPLLAVGAVHHHLIRAGLRLKASLIVDTAQCWSTHHFACLVGYGASAICPYLALESVRQWWLDEKTQKLMENGRLDRIDLPTALKNYRQSVEAGLFKILSKMGISLLASYHGAQIFEAIGLGAELVEYAFAGTTSRVGGLTIADVAGEVMVFHGMAFPEMAKKLENFGFVNYRPGGEYHMNSPEMSKSLHKAVAAYKVGGNGNNGEAYDHYELYRQYLKDRPVTALRDLLDFNADQPAISLEEVESVESIVKRFCTGGMSLGALSREAHETLAIAMNRLGAKSNSGEGGEDVVRYLTLDDVDSEGNSPTLPHLHGLQNGDTANSAIKQIASGRFGVTPEYLMSGKQLEIKMAQGAKPGEGGQLPGKKVSEYIAMLRRSKPGVTLISPPPHHDIYSIEDLAQLIYDLHQINPEAQVSVKLVAEIGIGTIAAGVAKANADIIQISGHDGGTGASPLSSIKHAGSPWELGVTEVHRVLMENQLRDRVLLRADGGLKTGWDVVMAALMGAEEYGFGSIAMIAEGCIMARVCHTNNCPVGVATQQERLRQRFKGVPGQVVNFFYFIAEEVRSLLAHLGYRSLDDIIGRTDLLKVRSDVQLSKTQNLTLDCLLNLPDTKQNRQWLNHEPVHSNGPVLDDDILADPDIQEAINHQTTATKTYRLVNTDRTVGTRLSGAIAKKYGNNGFEGNITLNFQGAAGQSFGAFNLDGMTLHLQGEANDYVGKGMNGGEIVIVPHPQASFAPEDNVIIGNTCLYGATGGNLYANGRAGERFAVRNSVGKAVIEGAGDHCCEYMTGGVIVVLGPVGRNVGAGMTGGLAYFLDEVGDLPEKINPEIITLQRITASKGEEQLKSLITAHVEHTGSPKGKAILANWSDYLGKFWQAVPPSEKDSPEANGDVSLTGEKTLTSV.

Catalysis depends on cysteine 37, which acts as the For GATase activity. The Glutamine amidotransferase type-2 domain maps to 37–431 (CGVGFIANLR…PGQMIAVDLA (395 aa)). [3Fe-4S] cluster contacts are provided by cysteine 1173, cysteine 1179, and cysteine 1184. A disordered region spans residues 1533 to 1556 (PSEKDSPEANGDVSLTGEKTLTSV).

Belongs to the glutamate synthase family. [3Fe-4S] cluster is required as a cofactor. It depends on FAD as a cofactor. Requires FMN as cofactor.

The catalysed reaction is 2 oxidized [2Fe-2S]-[ferredoxin] + 2 L-glutamate = L-glutamine + 2 reduced [2Fe-2S]-[ferredoxin] + 2-oxoglutarate + 2 H(+). The protein operates within amino-acid biosynthesis; L-glutamate biosynthesis via GLT pathway; L-glutamate from 2-oxoglutarate and L-glutamine (ferredoxin route): step 1/1. Its pathway is energy metabolism; nitrogen metabolism. This Synechocystis sp. (strain ATCC 27184 / PCC 6803 / Kazusa) protein is Ferredoxin-dependent glutamate synthase 2 (gltS).